The primary structure comprises 123 residues: Protein Wnt-7b (123 aa).

Residue Ser1 is the site of O-palmitoleoyl serine; by PORCN attachment. Residues 33–61 (VEVVRASRLRQPTFLKIKQIKSYQKPMET) are disordered linker. A disulfide bridge connects residues Cys89 and Cys104. Residue Asn90 is glycosylated (N-linked (GlcNAc...) asparagine).

This sequence belongs to the Wnt family. Post-translationally, palmitoleoylation is required for efficient binding to frizzled receptors. Depalmitoleoylation leads to Wnt signaling pathway inhibition.

Its subcellular location is the secreted. The protein localises to the extracellular space. It localises to the extracellular matrix. In terms of biological role, ligand for members of the frizzled family of seven transmembrane receptors that functions in the canonical Wnt/beta-catenin signaling pathway. Required for normal fusion of the chorion and the allantois during placenta development. Required for central nervous system (CNS) angiogenesis and blood-brain barrier regulation. The polypeptide is Protein Wnt-7b (WNT7B) (Anser caerulescens (Snow goose)).